The sequence spans 1086 residues: Ribonuclease 3 (1086 aa).

Disordered stretches follow at residues 1 to 77 (MSDE…DSPR) and 158 to 233 (CHSM…LRNF). The span at 13–23 (PKHKRARRKKY) shows a compositional bias: basic residues. The segment covering 24–35 (QKEYQERHKEEM) has biased composition (basic and acidic residues). The segment covering 43–53 (FQNQPSTSSAP) has biased composition (polar residues). Residues 159 to 168 (HSMKGRKTPK) are compositionally biased toward basic residues. Residues 181–190 (VSDDSNDSQD) show a composition bias toward acidic residues. The span at 191 to 201 (EASTSEPTNRQ) shows a compositional bias: polar residues. Positions 203 to 217 (PEADKTGEVKDEKQT) are enriched in basic and acidic residues. 2 RNase III domains span residues 607-781 (LDVF…LDGG) and 833-957 (FHAL…VDRG). Positions 694, 767, 770, 873, 943, and 946 each coordinate Mg(2+). The DRBM domain occupies 984–1059 (DAKSHLQQWC…AELALANLES (76 aa)).

This sequence belongs to the ribonuclease III family. Mg(2+) is required as a cofactor. It depends on Mn(2+) as a cofactor.

The protein resides in the nucleus. It catalyses the reaction Endonucleolytic cleavage to 5'-phosphomonoester.. In terms of biological role, executes the initial step of microRNA (miRNA) processing in the nucleus, that is the cleavage of pri-miRNA to release pre-miRNA. Involved in pre-rRNA processing. Cleaves double-strand RNA and does not cleave single-strand RNA. Involved in fertility. Required for the function or synthesis of the let-7 miRNA. In Caenorhabditis elegans, this protein is Ribonuclease 3 (drsh-1).